We begin with the raw amino-acid sequence, 198 residues long: MSNEENKINEEALKQQDAAEVEVEAVGTDADIEWNEEADESAVKIAELEAALLASEARVKEQQDSVLRAKAEVENMRRRTEQEIDKARKYALNRFAEELLPVIDNLERAIQAADAESEAVKPLLEGVELTHKTFVDVVSKFGLKEINPEGQPFNPEWHQAMSIQESPDHESNTVMFVMQKGYELNGRVIRPAMVMVAK.

Residues 1–14 (MSNEENKINEEALK) show a composition bias toward basic and acidic residues. Residues 1–20 (MSNEENKINEEALKQQDAAE) form a disordered region.

Belongs to the GrpE family. As to quaternary structure, homodimer.

It localises to the cytoplasm. Functionally, participates actively in the response to hyperosmotic and heat shock by preventing the aggregation of stress-denatured proteins, in association with DnaK and GrpE. It is the nucleotide exchange factor for DnaK and may function as a thermosensor. Unfolded proteins bind initially to DnaJ; upon interaction with the DnaJ-bound protein, DnaK hydrolyzes its bound ATP, resulting in the formation of a stable complex. GrpE releases ADP from DnaK; ATP binding to DnaK triggers the release of the substrate protein, thus completing the reaction cycle. Several rounds of ATP-dependent interactions between DnaJ, DnaK and GrpE are required for fully efficient folding. The protein is Protein GrpE of Vibrio vulnificus (strain YJ016).